We begin with the raw amino-acid sequence, 337 residues long: uncharacterized protein (337 aa).

The 172-residue stretch at I3–N174 folds into the MurNAc-LAA domain.

To C.perfringens pIP404 ORF10.

This is an uncharacterized protein from Clostridium perfringens (strain 13 / Type A).